A 362-amino-acid polypeptide reads, in one-letter code: Peptide chain release factor 1 (362 aa).

An N5-methylglutamine modification is found at Gln-237. Residues 285–295 (EEKRHAEEAST) are compositionally biased toward basic and acidic residues. The segment at 285–311 (EEKRHAEEASTRRNLLGSGDRSDRIRT) is disordered.

Belongs to the prokaryotic/mitochondrial release factor family. Methylated by PrmC. Methylation increases the termination efficiency of RF1.

Its subcellular location is the cytoplasm. In terms of biological role, peptide chain release factor 1 directs the termination of translation in response to the peptide chain termination codons UAG and UAA. This is Peptide chain release factor 1 from Photobacterium profundum (strain SS9).